The following is a 381-amino-acid chain: Lipid-A-disaccharide synthase (381 aa).

It belongs to the LpxB family.

It carries out the reaction a lipid X + a UDP-2-N,3-O-bis[(3R)-3-hydroxyacyl]-alpha-D-glucosamine = a lipid A disaccharide + UDP + H(+). It participates in bacterial outer membrane biogenesis; LPS lipid A biosynthesis. Functionally, condensation of UDP-2,3-diacylglucosamine and 2,3-diacylglucosamine-1-phosphate to form lipid A disaccharide, a precursor of lipid A, a phosphorylated glycolipid that anchors the lipopolysaccharide to the outer membrane of the cell. The protein is Lipid-A-disaccharide synthase of Rickettsia bellii (strain OSU 85-389).